Here is a 401-residue protein sequence, read N- to C-terminus: 1-deoxy-D-xylulose 5-phosphate reductoisomerase (401 aa).

T11, G12, S13, I14, R38, N39, and N125 together coordinate NADPH. K126 lines the 1-deoxy-D-xylulose 5-phosphate pocket. E127 lines the NADPH pocket. D151 is a Mn(2+) binding site. 1-deoxy-D-xylulose 5-phosphate-binding residues include S152, E153, S179, and H202. E153 serves as a coordination point for Mn(2+). G208 contributes to the NADPH binding site. Positions 215, 220, 221, and 224 each coordinate 1-deoxy-D-xylulose 5-phosphate. E224 is a binding site for Mn(2+).

It belongs to the DXR family. Mg(2+) is required as a cofactor. Mn(2+) serves as cofactor.

It carries out the reaction 2-C-methyl-D-erythritol 4-phosphate + NADP(+) = 1-deoxy-D-xylulose 5-phosphate + NADPH + H(+). It participates in isoprenoid biosynthesis; isopentenyl diphosphate biosynthesis via DXP pathway; isopentenyl diphosphate from 1-deoxy-D-xylulose 5-phosphate: step 1/6. Catalyzes the NADPH-dependent rearrangement and reduction of 1-deoxy-D-xylulose-5-phosphate (DXP) to 2-C-methyl-D-erythritol 4-phosphate (MEP). The chain is 1-deoxy-D-xylulose 5-phosphate reductoisomerase from Paraburkholderia phytofirmans (strain DSM 17436 / LMG 22146 / PsJN) (Burkholderia phytofirmans).